Reading from the N-terminus, the 82-residue chain is Bowman-Birk type proteinase inhibitor (82 aa).

The segment at Ser1–Cys24 is disordered. 7 disulfide bridges follow: Cys18–Cys72, Cys19–Cys34, Cys22–Cys68, Cys24–Cys32, Cys42–Cys49, Cys46–Cys61, and Cys51–Cys59.

This sequence belongs to the Bowman-Birk serine protease inhibitor family.

Functionally, trypsin and chymotrypsin are inhibited simultaneously. There are two separate reactive sites for trypsin and chymotrypsin but they do not inhibit simultaneously. This is Bowman-Birk type proteinase inhibitor from Phaseolus angularis (Azuki bean).